The primary structure comprises 230 residues: Transcription factor bHLH147 (230 aa).

Residues 1 to 17 (MESISPVSNQLLQPTTT) are compositionally biased toward polar residues. A disordered region spans residues 1 to 52 (MESISPVSNQLLQPTTTSSNSDRSRRKRKKKSSPSSVEKSPSPSISLEKWRS). Residues 33-46 (SPSSVEKSPSPSIS) show a composition bias toward low complexity. Positions 147 to 196 (KQRATVLRLKAKGLPAVQRKVKVLSRLVPGCRKQSLPVVLEETTDYIAAM) constitute a bHLH domain. Residues 210 to 230 (VSSSPPPPTPGHEGGQTHMLG) are disordered.

Homodimer. Interacts with PRE3.

It is found in the nucleus. In terms of biological role, atypical bHLH transcription factor probably unable to bind DNA. Negatively regulates brassinosteroid signaling. The polypeptide is Transcription factor bHLH147 (BHLH147) (Arabidopsis thaliana (Mouse-ear cress)).